The primary structure comprises 308 residues: Mitoferrin (308 aa).

The next 6 membrane-spanning stretches (helical) occupy residues 13–29 (GGSFYVHLIAGAAAGFA), 69–89 (ITGLFRGLTAVAAGAAPSHAV), 111–131 (IKVGIAGAIATMTSEAVASPM), 168–184 (YTTTLVMNVPYNIVYFA), 213–233 (LVAGGGAGMLAAAFTNPFDVV), and 285–302 (MVFHSMSSAIVWSVYEYF). Solcar repeat units follow at residues 14-100 (GSFY…LKFK), 108-192 (HHPI…LKKI), and 207-305 (YQLI…FKFI).

The protein belongs to the mitochondrial carrier (TC 2.A.29) family.

It localises to the mitochondrion inner membrane. Mitochondrial solute carriers shuttle metabolites, nucleotides, and cofactors through the mitochondrial inner membrane. Mitochondrial iron transporter that mediates iron uptake. Probably required for heme synthesis of hemoproteins and Fe-S cluster assembly. The protein is Mitoferrin (mcfF) of Dictyostelium discoideum (Social amoeba).